A 251-amino-acid chain; its full sequence is MAGHSKWATTKHKKAANDAKRGKEFAKLIKNIEVAARTGGGDPAANPTLDDMIKKAKKASVPNDNIERARKRGSGEEAGGADWETVMYEGYGPNGVAMLIECLTDNRNRAATDVRTAMTKNGGNLGESGSVAYMFSRTGLVMVEKGELSEDDILIAVLEAGAEEVNDNGEKFEITCAPGDVPAVREALVAADIEVDDTDTDFRASVEVPLQADDARKIFRLIDALEDSDDVQNVYTNMDLSEEVLAELGED.

The tract at residues 1 to 21 is disordered; the sequence is MAGHSKWATTKHKKAANDAKR.

The protein belongs to the TACO1 family.

It localises to the cytoplasm. The chain is Probable transcriptional regulatory protein cauri_1421 from Corynebacterium aurimucosum (strain ATCC 700975 / DSM 44827 / CIP 107346 / CN-1) (Corynebacterium nigricans).